A 70-amino-acid polypeptide reads, in one-letter code: Putative membrane protein insertion efficiency factor (70 aa).

This sequence belongs to the UPF0161 family.

Its subcellular location is the cell inner membrane. Could be involved in insertion of integral membrane proteins into the membrane. This chain is Putative membrane protein insertion efficiency factor, found in Desulforapulum autotrophicum (strain ATCC 43914 / DSM 3382 / VKM B-1955 / HRM2) (Desulfobacterium autotrophicum).